A 447-amino-acid chain; its full sequence is T-DNA border endonuclease VirD2 (447 aa).

Disordered stretches follow at residues 214 to 265 (ADLE…QEPA) and 300 to 447 (SGSS…GNRR). Residues 251-260 (NNRQNESQVH) show a composition bias toward polar residues. Low complexity predominate over residues 390 to 406 (TATTRASTATDSLSATA). Over residues 427–447 (PSERKRERDERSKDGRGGNRR) the composition is skewed to basic and acidic residues.

Its function is as follows. Tumor formation by A.tumefaciens involves the transfer and integration of a defined segment (T-DNA) of Ti plasmid DNA into the plant nuclear genome. The virD operon encodes a site-specific endonuclease that cleaves at a unique site within both 24 bp direct repeats flanking the T-DNA. This chain is T-DNA border endonuclease VirD2 (virD2), found in Agrobacterium fabrum (strain C58 / ATCC 33970) (Agrobacterium tumefaciens (strain C58)).